A 134-amino-acid polypeptide reads, in one-letter code: Small ribosomal subunit protein uS8 (134 aa).

This sequence belongs to the universal ribosomal protein uS8 family. In terms of assembly, part of the 30S ribosomal subunit. Contacts proteins S5 and S12.

In terms of biological role, one of the primary rRNA binding proteins, it binds directly to 16S rRNA central domain where it helps coordinate assembly of the platform of the 30S subunit. The sequence is that of Small ribosomal subunit protein uS8 from Thermotoga maritima (strain ATCC 43589 / DSM 3109 / JCM 10099 / NBRC 100826 / MSB8).